A 430-amino-acid chain; its full sequence is Histidine--tRNA ligase (430 aa).

The protein belongs to the class-II aminoacyl-tRNA synthetase family. In terms of assembly, homodimer.

The protein localises to the cytoplasm. The catalysed reaction is tRNA(His) + L-histidine + ATP = L-histidyl-tRNA(His) + AMP + diphosphate + H(+). The protein is Histidine--tRNA ligase of Parasynechococcus marenigrum (strain WH8102).